A 184-amino-acid chain; its full sequence is Probable chemoreceptor glutamine deamidase CheD (184 aa).

Belongs to the CheD family.

The catalysed reaction is L-glutaminyl-[protein] + H2O = L-glutamyl-[protein] + NH4(+). In terms of biological role, probably deamidates glutamine residues to glutamate on methyl-accepting chemotaxis receptors (MCPs), playing an important role in chemotaxis. The sequence is that of Probable chemoreceptor glutamine deamidase CheD from Rhizobium rhizogenes (strain K84 / ATCC BAA-868) (Agrobacterium radiobacter).